Here is a 395-residue protein sequence, read N- to C-terminus: Flap endonuclease 1 (395 aa).

The N-domain stretch occupies residues 1–104 (MGIKHLYQVI…GELAKRSARK (104 aa)). D34 provides a ligand contact to Mg(2+). Residues R47 and R70 each contribute to the DNA site. Residue D86 coordinates Mg(2+). The interval 99–126 (KRSARKREAHEAHEEAKETGTAEDMEKF) is disordered. The I-domain stretch occupies residues 122-253 (DMEKFSRRTV…NTALKLIREH (132 aa)). Residues E158, E160, D179, and D181 each coordinate Mg(2+). E158 serves as a coordination point for DNA. The DNA site is built by G231 and D233. Residue D233 participates in Mg(2+) binding. An interaction with PCNA region spans residues 341–349 (QQSRLEGFF). Positions 356 to 389 (EAEKASLKRKHDEKIEEQKKRKKEEAKAKKEAKA) are enriched in basic and acidic residues. A disordered region spans residues 356–395 (EAEKASLKRKHDEKIEEQKKRKKEEAKAKKEAKARPRGAV).

Belongs to the XPG/RAD2 endonuclease family. FEN1 subfamily. As to quaternary structure, interacts with PCNA. Three molecules of fen1 bind to one PCNA trimer with each molecule binding to one PCNA monomer. PCNA stimulates the nuclease activity without altering cleavage specificity. The cofactor is Mg(2+). Post-translationally, phosphorylated. Phosphorylation upon DNA damage induces relocalization to the nuclear plasma.

The protein resides in the nucleus. It localises to the nucleolus. The protein localises to the nucleoplasm. Its subcellular location is the mitochondrion. Its function is as follows. Structure-specific nuclease with 5'-flap endonuclease and 5'-3' exonuclease activities involved in DNA replication and repair. During DNA replication, cleaves the 5'-overhanging flap structure that is generated by displacement synthesis when DNA polymerase encounters the 5'-end of a downstream Okazaki fragment. It enters the flap from the 5'-end and then tracks to cleave the flap base, leaving a nick for ligation. Also involved in the long patch base excision repair (LP-BER) pathway, by cleaving within the apurinic/apyrimidinic (AP) site-terminated flap. Acts as a genome stabilization factor that prevents flaps from equilibrating into structures that lead to duplications and deletions. Also possesses 5'-3' exonuclease activity on nicked or gapped double-stranded DNA, and exhibits RNase H activity. Also involved in replication and repair of rDNA and in repairing mitochondrial DNA. This is Flap endonuclease 1 (fen1) from Talaromyces stipitatus (strain ATCC 10500 / CBS 375.48 / QM 6759 / NRRL 1006) (Penicillium stipitatum).